The sequence spans 323 residues: Breast cancer metastasis-suppressor 1-like protein (323 aa).

Positions 1 to 17 are enriched in basic and acidic residues; it reads MPVHSRGDKKETNHHDE. The segment at 1–56 is disordered; that stretch reads MPVHSRGDKKETNHHDEMEVDYAENEGSSSEDEDTESSSVSEDGDSSEMDDEDCER. Acidic residues predominate over residues 18 to 53; that stretch reads MEVDYAENEGSSSEDEDTESSSVSEDGDSSEMDDED. 2 coiled-coil regions span residues 52-84 and 149-180; these read EDCE…KERL and EKLL…ITSE. At serine 197 the chain carries Phosphoserine. Glycyl lysine isopeptide (Lys-Gly) (interchain with G-Cter in SUMO2) cross-links involve residues lysine 240 and lysine 246.

Belongs to the BRMS1 family. As to quaternary structure, component of the Sin3/HDAC1 corepressor complex at least composed of BRMS1, BRMS1L and ING2/ING1L. Interacts with HDAC and SIN3A.

Its subcellular location is the nucleus. Involved in the histone deacetylase (HDAC1)-dependent transcriptional repression activity. When overexpressed in lung cancer cell line that lacks p53/TP53 expression, inhibits cell growth. The polypeptide is Breast cancer metastasis-suppressor 1-like protein (BRMS1L) (Bos taurus (Bovine)).